The primary structure comprises 419 residues: L-rhamnose isomerase (419 aa).

The Mn(2+) site is built by histidine 262, aspartate 294, and aspartate 296.

This sequence belongs to the rhamnose isomerase family. Homotetramer. Mn(2+) serves as cofactor.

The protein localises to the cytoplasm. The catalysed reaction is L-rhamnopyranose = L-rhamnulose. The protein operates within carbohydrate degradation; L-rhamnose degradation; glycerone phosphate from L-rhamnose: step 1/3. Its function is as follows. Catalyzes the interconversion of L-rhamnose and L-rhamnulose. This chain is L-rhamnose isomerase, found in Salmonella gallinarum (strain 287/91 / NCTC 13346).